The chain runs to 360 residues: Putative F-box protein At1g65770 (360 aa).

Residues 2-50 (ADWSTLPVDLLNMIAGRLFSNIELKRFRSICRSWRSSVPGAGKKNPFRT) form the F-box domain.

The sequence is that of Putative F-box protein At1g65770 from Arabidopsis thaliana (Mouse-ear cress).